Here is a 413-residue protein sequence, read N- to C-terminus: Multidrug resistance protein MdtA (413 aa).

Positions 1-20 are cleaved as a signal peptide; it reads MKGSNTFRWAIAIGVVVAAA. 2 disordered regions span residues 31-57 and 391-413; these read SPTA…RDGP and EPQT…GARA. Residues 397–413 are compositionally biased toward basic and acidic residues; the sequence is ADEKSPSRHEGQKGARA.

This sequence belongs to the membrane fusion protein (MFP) (TC 8.A.1) family. As to quaternary structure, part of a tripartite efflux system composed of MdtA, MdtB and MdtC.

It localises to the cell inner membrane. In Salmonella typhimurium (strain LT2 / SGSC1412 / ATCC 700720), this protein is Multidrug resistance protein MdtA.